The following is a 509-amino-acid chain: ATP synthase subunit alpha (509 aa).

171 to 178 (GDRQTGKT) is an ATP binding site.

Belongs to the ATPase alpha/beta chains family. F-type ATPases have 2 components, CF(1) - the catalytic core - and CF(0) - the membrane proton channel. CF(1) has five subunits: alpha(3), beta(3), gamma(1), delta(1), epsilon(1). CF(0) has three main subunits: a(1), b(2) and c(9-12). The alpha and beta chains form an alternating ring which encloses part of the gamma chain. CF(1) is attached to CF(0) by a central stalk formed by the gamma and epsilon chains, while a peripheral stalk is formed by the delta and b chains.

It is found in the cell inner membrane. It catalyses the reaction ATP + H2O + 4 H(+)(in) = ADP + phosphate + 5 H(+)(out). Produces ATP from ADP in the presence of a proton gradient across the membrane. The alpha chain is a regulatory subunit. The sequence is that of ATP synthase subunit alpha from Neorickettsia sennetsu (strain ATCC VR-367 / Miyayama) (Ehrlichia sennetsu).